A 363-amino-acid polypeptide reads, in one-letter code: MASDAASLVLGIETTCDETAAAVIERRADGSGQILSNIVHSQIEDHAPFGGVVPEIAARAHVDLLDGIIARAMREADVGFAQLSGVAAAAGPGLIGGVIVGLTTAKAIALVHETPLIAVNHLEAHALTPRLTHALEFPYCLFLASGGHTQIVAVLGVGDYVRLGTTVDDAMGEAFDKVAKMLGLPYPGGPQVERAAETGDADRFAFPRPMLGRAEPNFSLSGLKTAVRNEASRLMPLERQDIADLCAGFQAAVLDATADRLKVGLALFRDRFGPPHALVAAGGVAANQAIRRALHDVAVAAGTVLMMPPPKLCTDNGAMIAWAGAERLALGLTDPLDTAPRARWLLDANIATPAKFANTRAGF.

2 residues coordinate Fe cation: His-121 and His-125. Substrate-binding positions include 143 to 147, Asp-176, Gly-189, and Asn-287; that span reads LASGG. Position 315 (Asp-315) interacts with Fe cation.

It belongs to the KAE1 / TsaD family. Fe(2+) serves as cofactor.

It is found in the cytoplasm. The enzyme catalyses L-threonylcarbamoyladenylate + adenosine(37) in tRNA = N(6)-L-threonylcarbamoyladenosine(37) in tRNA + AMP + H(+). Its function is as follows. Required for the formation of a threonylcarbamoyl group on adenosine at position 37 (t(6)A37) in tRNAs that read codons beginning with adenine. Is involved in the transfer of the threonylcarbamoyl moiety of threonylcarbamoyl-AMP (TC-AMP) to the N6 group of A37, together with TsaE and TsaB. TsaD likely plays a direct catalytic role in this reaction. The polypeptide is tRNA N6-adenosine threonylcarbamoyltransferase (Rhodopseudomonas palustris (strain BisA53)).